Reading from the N-terminus, the 96-residue chain is Large ribosomal subunit protein bL28 (96 aa).

Belongs to the bacterial ribosomal protein bL28 family.

In Leptospira biflexa serovar Patoc (strain Patoc 1 / Ames), this protein is Large ribosomal subunit protein bL28.